A 126-amino-acid chain; its full sequence is Type II methyltransferase M.HgiGI (126 aa).

Residues 1–126 (MKTIDLFAGC…ARLSKIHQQA (126 aa)) form the SAM-dependent MTase C5-type domain. The active site involves C75.

The protein belongs to the class I-like SAM-binding methyltransferase superfamily. C5-methyltransferase family.

It carries out the reaction a 2'-deoxycytidine in DNA + S-adenosyl-L-methionine = a 5-methyl-2'-deoxycytidine in DNA + S-adenosyl-L-homocysteine + H(+). A methylase, recognizes the double-stranded sequence 5'-GRCGYC-3', methylates C-? on both strands, and protects the DNA from cleavage by the HgiEI endonuclease. The polypeptide is Type II methyltransferase M.HgiGI (Herpetosiphon aurantiacus (Herpetosiphon giganteus)).